Here is a 219-residue protein sequence, read N- to C-terminus: MRIILLGAPGAGKGTQAHYISKALDIPQISTGDMLRAAVKAETPVGLEAKKVMDAGQLVSDDIILALVKERLKNADCSNGCLFDGFPRTLAQAEALKKDGVGIDHVVEIDVADSEIITRMSGRRVHLSSGRTYHVLFNPPKQEGLDDETGEPLVQRADDEEDTVRKRLEIYHNQTAPLIEYYSGWASESIENAPRYRKIKGTGSVEEIRDRILGVLTSC.

An ATP-binding site is contributed by 10 to 15 (GAGKGT). The interval 30–59 (STGDMLRAAVKAETPVGLEAKKVMDAGQLV) is NMP. AMP is bound by residues threonine 31, arginine 36, 57 to 59 (QLV), 85 to 88 (GFPR), and glutamine 92. The tract at residues 122–159 (GRRVHLSSGRTYHVLFNPPKQEGLDDETGEPLVQRADD) is LID. ATP is bound by residues arginine 123 and 132-133 (TY). Arginine 156 and arginine 167 together coordinate AMP. Glycine 203 provides a ligand contact to ATP.

Belongs to the adenylate kinase family. As to quaternary structure, monomer.

It localises to the cytoplasm. The enzyme catalyses AMP + ATP = 2 ADP. Its pathway is purine metabolism; AMP biosynthesis via salvage pathway; AMP from ADP: step 1/1. Its function is as follows. Catalyzes the reversible transfer of the terminal phosphate group between ATP and AMP. Plays an important role in cellular energy homeostasis and in adenine nucleotide metabolism. This is Adenylate kinase from Chlorobium limicola (strain DSM 245 / NBRC 103803 / 6330).